The chain runs to 193 residues: Major structural subunit of bundle-forming pilus (193 aa).

Residues M1–G13 constitute a propeptide, leader sequence. L14 carries the post-translational modification N-methylleucine. The helical transmembrane segment at L14–F35 threads the bilayer. Residues C129 and C179 are joined by a disulfide bond.

It belongs to the N-Me-Phe pilin family. As to quaternary structure, 10 to 100 laterally aligned filaments or bundle-forming pili coalesce into rope-like bundles. These form linkages between the bacteria within the enteropathogenic E.coli (EPEC) microcolonies that are attached to epithelial cells.

The protein localises to the fimbrium. The protein resides in the membrane. Functionally, major component of type IV bundle-forming pili (BFP) that plays a role in adherence to host cells and virulence. This chain is Major structural subunit of bundle-forming pilus (bfpA), found in Escherichia coli O127:H6 (strain E2348/69 / EPEC).